We begin with the raw amino-acid sequence, 620 residues long: 1-deoxy-D-xylulose-5-phosphate synthase (620 aa).

Residues His-80 and 121 to 123 each bind thiamine diphosphate; that span reads GHS. Residue Asp-152 coordinates Mg(2+). Residues 153-154, Asn-181, Tyr-288, and Glu-370 each bind thiamine diphosphate; that span reads GA. Residue Asn-181 coordinates Mg(2+).

It belongs to the transketolase family. DXPS subfamily. In terms of assembly, homodimer. Mg(2+) serves as cofactor. It depends on thiamine diphosphate as a cofactor.

The catalysed reaction is D-glyceraldehyde 3-phosphate + pyruvate + H(+) = 1-deoxy-D-xylulose 5-phosphate + CO2. Its pathway is metabolic intermediate biosynthesis; 1-deoxy-D-xylulose 5-phosphate biosynthesis; 1-deoxy-D-xylulose 5-phosphate from D-glyceraldehyde 3-phosphate and pyruvate: step 1/1. Catalyzes the acyloin condensation reaction between C atoms 2 and 3 of pyruvate and glyceraldehyde 3-phosphate to yield 1-deoxy-D-xylulose-5-phosphate (DXP). This is 1-deoxy-D-xylulose-5-phosphate synthase from Pseudoalteromonas translucida (strain TAC 125).